The following is a 217-amino-acid chain: NADH-quinone oxidoreductase subunit I (217 aa).

A disordered region spans residues 22-41 (TTEQYPEEKKETAPRFHGRH). 2 consecutive 4Fe-4S ferredoxin-type domains span residues 43-73 (LNRH…VEGA) and 89-118 (RVYQ…MSND). Residues Cys-53, Cys-56, Cys-59, Cys-63, Cys-98, Cys-101, Cys-104, and Cys-108 each contribute to the [4Fe-4S] cluster site. The segment at 193 to 217 (ARRTAGEHSRADEVPAHGAGSERPR) is disordered.

The protein belongs to the complex I 23 kDa subunit family. As to quaternary structure, NDH-1 is composed of 14 different subunits. Subunits NuoA, H, J, K, L, M, N constitute the membrane sector of the complex. [4Fe-4S] cluster is required as a cofactor.

Its subcellular location is the cell membrane. It catalyses the reaction a quinone + NADH + 5 H(+)(in) = a quinol + NAD(+) + 4 H(+)(out). NDH-1 shuttles electrons from NADH, via FMN and iron-sulfur (Fe-S) centers, to quinones in the respiratory chain. The immediate electron acceptor for the enzyme in this species is believed to be ubiquinone. Couples the redox reaction to proton translocation (for every two electrons transferred, four hydrogen ions are translocated across the cytoplasmic membrane), and thus conserves the redox energy in a proton gradient. The chain is NADH-quinone oxidoreductase subunit I from Frankia casuarinae (strain DSM 45818 / CECT 9043 / HFP020203 / CcI3).